A 118-amino-acid chain; its full sequence is Large ribosomal subunit protein bL20 (118 aa).

Belongs to the bacterial ribosomal protein bL20 family.

Binds directly to 23S ribosomal RNA and is necessary for the in vitro assembly process of the 50S ribosomal subunit. It is not involved in the protein synthesizing functions of that subunit. The protein is Large ribosomal subunit protein bL20 of Leptothrix cholodnii (strain ATCC 51168 / LMG 8142 / SP-6) (Leptothrix discophora (strain SP-6)).